Here is an 830-residue protein sequence, read N- to C-terminus: Receptor-like protein kinase HERK 1 (830 aa).

The N-terminal stretch at 1-24 (MGIEKFETFILISTISILLCICHG) is a signal peptide. Residues 25–405 (FTPVDNYLIN…SSSSSKSNLG (381 aa)) lie on the Extracellular side of the membrane. 5 N-linked (GlcNAc...) asparagine glycosylation sites follow: N40, N146, N217, N280, and N381. Residues 406-426 (LIVGSAIGSLLAVVFLGSCFV) traverse the membrane as a helical segment. Residues 427–830 (LYKKRKRGQD…FSQLVKSEGR (404 aa)) are Cytoplasmic-facing. The Protein kinase domain occupies 485–758 (FDESRNIGVG…GDVLWNLEYA (274 aa)). ATP contacts are provided by residues 491 to 499 (IGVGGFGKV) and K513. D609 functions as the Proton acceptor in the catalytic mechanism.

Belongs to the protein kinase superfamily. Ser/Thr protein kinase family. Autophosphorylated. As to expression, expressed in most vegetative tissues, including leaves, stems and roots, especially in cell elongation regions.

The protein localises to the cell membrane. Its function is as follows. Receptor-like protein kinase required for cell elongation during vegetative growth, mostly in a brassinosteroid-(BR-) independent manner. The chain is Receptor-like protein kinase HERK 1 (HERK1) from Arabidopsis thaliana (Mouse-ear cress).